The primary structure comprises 295 residues: Lipoyl synthase (295 aa).

C34, C39, C45, C60, C64, C67, and S273 together coordinate [4Fe-4S] cluster. In terms of domain architecture, Radical SAM core spans 46–262; that stretch reads WNKRHATIMI…KLMAYAKGFS (217 aa).

Belongs to the radical SAM superfamily. Lipoyl synthase family. The cofactor is [4Fe-4S] cluster.

It is found in the cytoplasm. It catalyses the reaction [[Fe-S] cluster scaffold protein carrying a second [4Fe-4S](2+) cluster] + N(6)-octanoyl-L-lysyl-[protein] + 2 oxidized [2Fe-2S]-[ferredoxin] + 2 S-adenosyl-L-methionine + 4 H(+) = [[Fe-S] cluster scaffold protein] + N(6)-[(R)-dihydrolipoyl]-L-lysyl-[protein] + 4 Fe(3+) + 2 hydrogen sulfide + 2 5'-deoxyadenosine + 2 L-methionine + 2 reduced [2Fe-2S]-[ferredoxin]. Its pathway is protein modification; protein lipoylation via endogenous pathway; protein N(6)-(lipoyl)lysine from octanoyl-[acyl-carrier-protein]: step 2/2. Its function is as follows. Catalyzes the radical-mediated insertion of two sulfur atoms into the C-6 and C-8 positions of the octanoyl moiety bound to the lipoyl domains of lipoate-dependent enzymes, thereby converting the octanoylated domains into lipoylated derivatives. The chain is Lipoyl synthase from Anaplasma marginale (strain St. Maries).